We begin with the raw amino-acid sequence, 549 residues long: Tegument protein (549 aa).

3 disordered regions span residues 50–92 (KKKA…TASP), 353–391 (ETGD…CSSY), and 523–542 (TPIK…TRSP). Polar residues-rich tracts occupy residues 75 to 84 (PQALSVPSLS) and 356 to 369 (DCSS…QTHR). Over residues 523-534 (TPIKTTSSSSPR) the composition is skewed to low complexity.

In terms of biological role, this viral structural protein may have important functions, such as protein kinase activity, DNA binding, and possible transcriptional activation of immediate-early genes. This chain is Tegument protein, found in Homo sapiens (Human).